Here is a 454-residue protein sequence, read N- to C-terminus: UPF0210 protein BLA_0552 (454 aa).

It belongs to the UPF0210 family. In terms of assembly, homodimer.

This chain is UPF0210 protein BLA_0552, found in Bifidobacterium animalis subsp. lactis (strain AD011).